Reading from the N-terminus, the 261-residue chain is Cytochrome c oxidase subunit 3 (261 aa).

The Mitochondrial matrix portion of the chain corresponds to 1-15; the sequence is MTHQTHAYHMVNPSP. The chain crosses the membrane as a helical span at residues 16–34; it reads WPLTGALSALLMTSGLIMW. The Mitochondrial intermembrane segment spans residues 35-40; it reads FHFNST. A helical membrane pass occupies residues 41–66; the sequence is TLLMLGLTTNMLTMYQWWRDIIREST. At 67–72 the chain is on the mitochondrial matrix side; it reads FQGHHT. The chain crosses the membrane as a helical span at residues 73–105; it reads PSVQKGLRYGMILFIISEVLFFTGFFWAFYHSS. At 106–128 the chain is on the mitochondrial intermembrane side; sequence LAPTPELGGCWPPTGIHPLNPLE. Residues 129-152 form a helical membrane-spanning segment; it reads VPLLNTSVLLASGVSITWAHHSLM. The Mitochondrial matrix segment spans residues 153 to 155; that stretch reads EGN. A helical transmembrane segment spans residues 156-183; the sequence is RNHMLQALFITIALGVYFTLLQASEYYE. The Mitochondrial intermembrane portion of the chain corresponds to 184-190; the sequence is APFTISD. A helical membrane pass occupies residues 191 to 223; sequence GVYGSTFFVATGFHGLHVIIGSTFLIVCFFRQL. Residues 224-232 are Mitochondrial matrix-facing; it reads KFHFTSNHH. The helical transmembrane segment at 233 to 256 threads the bilayer; the sequence is FGFEAAAWYWHFVDVVWLFLYVSI. Over 257 to 261 the chain is Mitochondrial intermembrane; that stretch reads YWWGS.

The protein belongs to the cytochrome c oxidase subunit 3 family. As to quaternary structure, component of the cytochrome c oxidase (complex IV, CIV), a multisubunit enzyme composed of 14 subunits. The complex is composed of a catalytic core of 3 subunits MT-CO1, MT-CO2 and MT-CO3, encoded in the mitochondrial DNA, and 11 supernumerary subunits COX4I, COX5A, COX5B, COX6A, COX6B, COX6C, COX7A, COX7B, COX7C, COX8 and NDUFA4, which are encoded in the nuclear genome. The complex exists as a monomer or a dimer and forms supercomplexes (SCs) in the inner mitochondrial membrane with NADH-ubiquinone oxidoreductase (complex I, CI) and ubiquinol-cytochrome c oxidoreductase (cytochrome b-c1 complex, complex III, CIII), resulting in different assemblies (supercomplex SCI(1)III(2)IV(1) and megacomplex MCI(2)III(2)IV(2)).

Its subcellular location is the mitochondrion inner membrane. The catalysed reaction is 4 Fe(II)-[cytochrome c] + O2 + 8 H(+)(in) = 4 Fe(III)-[cytochrome c] + 2 H2O + 4 H(+)(out). Its function is as follows. Component of the cytochrome c oxidase, the last enzyme in the mitochondrial electron transport chain which drives oxidative phosphorylation. The respiratory chain contains 3 multisubunit complexes succinate dehydrogenase (complex II, CII), ubiquinol-cytochrome c oxidoreductase (cytochrome b-c1 complex, complex III, CIII) and cytochrome c oxidase (complex IV, CIV), that cooperate to transfer electrons derived from NADH and succinate to molecular oxygen, creating an electrochemical gradient over the inner membrane that drives transmembrane transport and the ATP synthase. Cytochrome c oxidase is the component of the respiratory chain that catalyzes the reduction of oxygen to water. Electrons originating from reduced cytochrome c in the intermembrane space (IMS) are transferred via the dinuclear copper A center (CU(A)) of subunit 2 and heme A of subunit 1 to the active site in subunit 1, a binuclear center (BNC) formed by heme A3 and copper B (CU(B)). The BNC reduces molecular oxygen to 2 water molecules using 4 electrons from cytochrome c in the IMS and 4 protons from the mitochondrial matrix. The chain is Cytochrome c oxidase subunit 3 (MT-CO3) from Pelea capreolus (Gray rhebok).